A 97-amino-acid polypeptide reads, in one-letter code: Secreted RxLR effector protein BLR05 (97 aa).

Residues 1 to 21 (MGPQHLLALVVVSILVAAGNA) form the signal peptide. The RxLR-dEER signature appears at 32 to 60 (RALRPSVIADQEHAVHAIPATNFISKDED). Residues 69-89 (IEIIRIAIFSLLVVGVFAIMA) form a helical membrane-spanning segment.

It belongs to the RxLR effector family. In terms of assembly, interacts with host transcription factor NAC069.

Its subcellular location is the secreted. The protein resides in the host endoplasmic reticulum membrane. In terms of biological role, secreted effector that inhibits stress-induced relocalization of the transcription factor NAC069 to the nucleus, thus affecting its broad role in abiotic and biotic stress responses. The protein is Secreted RxLR effector protein BLR05 of Bremia lactucae (Lettuce downy mildew).